A 414-amino-acid polypeptide reads, in one-letter code: Probable acetyl-CoA acetyltransferase (414 aa).

Residue Cys110 is the Acyl-thioester intermediate of the active site. Residues Tyr205, 244 to 246 (KVL), and Lys249 each bind CoA. A K(+)-binding site is contributed by Tyr205. Positions 266 and 268 each coordinate K(+). Ser269 provides a ligand contact to CoA. Val366 contacts K(+). Residues His370 and Cys400 each act as proton acceptor in the active site.

This sequence belongs to the thiolase-like superfamily. Thiolase family.

It carries out the reaction 2 acetyl-CoA = acetoacetyl-CoA + CoA. The protein is Probable acetyl-CoA acetyltransferase of Dictyostelium discoideum (Social amoeba).